A 216-amino-acid polypeptide reads, in one-letter code: N-(5'-phosphoribosyl)anthranilate isomerase (216 aa).

The protein belongs to the TrpF family.

The enzyme catalyses N-(5-phospho-beta-D-ribosyl)anthranilate = 1-(2-carboxyphenylamino)-1-deoxy-D-ribulose 5-phosphate. Its pathway is amino-acid biosynthesis; L-tryptophan biosynthesis; L-tryptophan from chorismate: step 3/5. The polypeptide is N-(5'-phosphoribosyl)anthranilate isomerase (Leptospira borgpetersenii serovar Hardjo-bovis (strain JB197)).